The primary structure comprises 147 residues: Ubiquitin-conjugating enzyme E2 2 (147 aa).

In terms of domain architecture, UBC core spans 1–147 (MALKRIQKEL…AREWTQKYAM (147 aa)). Cys-85 functions as the Glycyl thioester intermediate in the catalytic mechanism.

It belongs to the ubiquitin-conjugating enzyme family. Interacts with the brc-1-brd-1 heterodimer following ionizing irradiation. Expressed in the nervous system.

It is found in the nucleus. Its subcellular location is the chromosome. The protein resides in the cytoplasm. It carries out the reaction S-ubiquitinyl-[E1 ubiquitin-activating enzyme]-L-cysteine + [E2 ubiquitin-conjugating enzyme]-L-cysteine = [E1 ubiquitin-activating enzyme]-L-cysteine + S-ubiquitinyl-[E2 ubiquitin-conjugating enzyme]-L-cysteine.. It functions in the pathway protein modification; protein ubiquitination. Catalyzes the covalent attachment of ubiquitin to other proteins. Mediates the selective degradation of short-lived and abnormal proteins. Plays a role in the DNA damage response. In particular, in response to ionizing radiation, associates with the E3 ubiquitin-protein ligase brc-1-brd-1 heterodimer on chromatin to activate E3-ubiquitin ligase activity of the heterodimer, and thus its DNA damage repair mechanisms. Required, cell autonomously, for death of the linker cell, a male-specific cell which guides the elongation of the gonad; perhaps acting as part of the ubiquitin proteasome system (UPS) and modulated by heat shock transcription factor hsf-1. The chain is Ubiquitin-conjugating enzyme E2 2 from Caenorhabditis elegans.